Here is a 325-residue protein sequence, read N- to C-terminus: MAQYKGTMREAGRAMHLLKKREKQREQMEVLKQRIAEETILKSQVDKKFSAHYDAVEAELKSSTVGLVTLNDMKARQEALIRERERQLAKRQQLEEQRLQQERLREQEHRRERKRKISCLSFALDDLDDQADAAEARRAGNLGKNPDVDTSFLPDRDREEEENRLREELRQEWEAQREKVKDEEMEVTFSYWDGSGHRRTVRVRKGNTVQQFLKKALQGQRKDFLELRSAGVEQLMFIKEDLILPHYHTFYDFIIAKARGKSRPLFNFDVHDDVRLLSDATMEKDESHAGKVVLRSWYEKNKHIFPASRWEAYDPEKKWDKYTIR.

A2 bears the N-acetylalanine mark. A disordered region spans residues 137–160 (RRAGNLGKNPDVDTSFLPDRDREE).

Belongs to the FAM50 family.

The chain is Protein FAM50B (FAM50B) from Macaca fascicularis (Crab-eating macaque).